A 506-amino-acid polypeptide reads, in one-letter code: uncharacterized protein (506 aa).

To group II intron maturases.

It localises to the plastid. The protein resides in the chloroplast. This is an uncharacterized protein from Euglena gracilis.